The primary structure comprises 646 residues: Alkyl/aryl-sulfatase BDS1 (646 aa).

Methionine 1 carries the N-acetylmethionine modification. Zn(2+) is bound by residues histidine 162, histidine 164, aspartate 166, histidine 167, glutamate 273, glutamate 292, and histidine 337.

This sequence belongs to the metallo-beta-lactamase superfamily. Type III sulfatase family. The cofactor is Zn(2+).

Alkyl/aryl-sulfatase. Enables the use of SDS and 4-nitrocatechol as sulfur source. In Saccharomyces cerevisiae (strain ATCC 204508 / S288c) (Baker's yeast), this protein is Alkyl/aryl-sulfatase BDS1 (BDS1).